The sequence spans 405 residues: Imidazolonepropionase (405 aa).

Residues His72 and His74 each coordinate Fe(3+). His72 and His74 together coordinate Zn(2+). 4-imidazolone-5-propanoate-binding residues include Arg81, Tyr144, and His177. An N-formimidoyl-L-glutamate-binding site is contributed by Tyr144. His242 is a Fe(3+) binding site. His242 is a binding site for Zn(2+). Residue Gln245 coordinates 4-imidazolone-5-propanoate. Asp317 provides a ligand contact to Fe(3+). Residue Asp317 coordinates Zn(2+). Positions 319 and 321 each coordinate N-formimidoyl-L-glutamate. Thr322 contributes to the 4-imidazolone-5-propanoate binding site.

This sequence belongs to the metallo-dependent hydrolases superfamily. HutI family. Requires Zn(2+) as cofactor. The cofactor is Fe(3+).

Its subcellular location is the cytoplasm. The catalysed reaction is 4-imidazolone-5-propanoate + H2O = N-formimidoyl-L-glutamate. It functions in the pathway amino-acid degradation; L-histidine degradation into L-glutamate; N-formimidoyl-L-glutamate from L-histidine: step 3/3. Catalyzes the hydrolytic cleavage of the carbon-nitrogen bond in imidazolone-5-propanoate to yield N-formimidoyl-L-glutamate. It is the third step in the universal histidine degradation pathway. This Erwinia tasmaniensis (strain DSM 17950 / CFBP 7177 / CIP 109463 / NCPPB 4357 / Et1/99) protein is Imidazolonepropionase.